A 94-amino-acid polypeptide reads, in one-letter code: Small ribosomal subunit protein bS18 (94 aa).

The protein belongs to the bacterial ribosomal protein bS18 family. In terms of assembly, part of the 30S ribosomal subunit. Forms a tight heterodimer with protein bS6.

In terms of biological role, binds as a heterodimer with protein bS6 to the central domain of the 16S rRNA, where it helps stabilize the platform of the 30S subunit. In Leptospira biflexa serovar Patoc (strain Patoc 1 / Ames), this protein is Small ribosomal subunit protein bS18.